The chain runs to 31 residues: Cytochrome b6-f complex subunit 6 (31 aa).

Residues 4–24 (LISYISLLAGFVIIASVFYLA) form a helical membrane-spanning segment.

Belongs to the PetL family. As to quaternary structure, the 4 large subunits of the cytochrome b6-f complex are cytochrome b6, subunit IV (17 kDa polypeptide, PetD), cytochrome f and the Rieske protein, while the 4 small subunits are PetG, PetL, PetM and PetN. The complex functions as a dimer.

It localises to the plastid. Its subcellular location is the chloroplast thylakoid membrane. In terms of biological role, component of the cytochrome b6-f complex, which mediates electron transfer between photosystem II (PSII) and photosystem I (PSI), cyclic electron flow around PSI, and state transitions. PetL is important for photoautotrophic growth as well as for electron transfer efficiency and stability of the cytochrome b6-f complex. This is Cytochrome b6-f complex subunit 6 from Tupiella akineta (Green alga).